Reading from the N-terminus, the 131-residue chain is Holo-[acyl-carrier-protein] synthase (131 aa).

Mg(2+) contacts are provided by Asp8 and Glu59.

It belongs to the P-Pant transferase superfamily. AcpS family. Requires Mg(2+) as cofactor.

It localises to the cytoplasm. It carries out the reaction apo-[ACP] + CoA = holo-[ACP] + adenosine 3',5'-bisphosphate + H(+). Its function is as follows. Transfers the 4'-phosphopantetheine moiety from coenzyme A to a Ser of acyl-carrier-protein. The polypeptide is Holo-[acyl-carrier-protein] synthase (Rickettsia massiliae (strain Mtu5)).